The following is a 582-amino-acid chain: Kelch-like protein diablo (582 aa).

Residues 1-22 (MGDVLISDRPPSPARLSHTSEK) form a disordered region. A BTB domain is found at 41-108 (CDVVINVSGR…CYTSHIVVEE (68 aa)). Positions 143 to 245 (CLGIRAFADT…SPKFLVGTVG (103 aa)) constitute a BACK domain. Kelch repeat units lie at residues 292-338 (VLFA…VLND), 340-386 (LYAV…VLDG), 387-433 (FLYA…VLGG), 435-480 (LYAI…VFNN), 482-527 (IYAV…VVNG), and 528-574 (QLYA…VMRA).

Its pathway is protein modification; protein ubiquitination. Probable substrate-specific adapter of an E3 ubiquitin-protein ligase complex which mediates the ubiquitination and subsequent proteasomal degradation of target proteins. May have a role in synapse differentiation and growth. The sequence is that of Kelch-like protein diablo from Culex quinquefasciatus (Southern house mosquito).